We begin with the raw amino-acid sequence, 62 residues long: Single-pass membrane and coiled-coil domain-containing protein 4 homolog (62 aa).

The tract at residues 1–27 (MRQLPGKAAKETRKMKRERKQQNKEGH) is disordered. Positions 9–31 (AKETRKMKRERKQQNKEGHNRVV) form a coiled coil. A helical membrane pass occupies residues 30 to 50 (VVTVAIPVCLAVFVMLIVYVY).

Belongs to the SMCO4 family.

Its subcellular location is the membrane. This chain is Single-pass membrane and coiled-coil domain-containing protein 4 homolog, found in Nematostella vectensis (Starlet sea anemone).